We begin with the raw amino-acid sequence, 591 residues long: Paxillin (591 aa).

Met-1 is subject to N-acetylmethionine. The LD motif 1 signature appears at 3–15 (DLDALLADLESTT). Positions 17–139 (HISKRPVFLS…SPTVMSSSLG (123 aa)) are disordered. Tyr-31 carries the phosphotyrosine; by PTK6 modification. Positions 45–54 (VPPPVPPPPS) are enriched in pro residues. Phosphoserine is present on Ser-83. Tyr-88 carries the post-translational modification Phosphotyrosine. Residues 89-99 (SSSAKNSSASN) are compositionally biased toward low complexity. Ser-106 carries the post-translational modification Phosphoserine. Tyr-118 is subject to Phosphotyrosine; by PTK6. Residues Ser-119, Ser-126, and Ser-130 each carry the phosphoserine modification. Over residues 121 to 137 (PNKQKSAEPSPTVMSSS) the composition is skewed to polar residues. Thr-132 carries the post-translational modification Phosphothreonine. Phosphoserine occurs at positions 137, 140, and 143. An LD motif 2 motif is present at residues 144-156 (ELDRLLLELNAVQ). The tract at residues 156 to 261 (QHSPPGFPAD…QQQTRISASS (106 aa)) is disordered. Position 181 is a phosphotyrosine (Tyr-181). The short motif at 216 to 228 (SVESLLDELESSV) is the LD motif 3 element. Ser-230 carries the phosphoserine modification. Polar residues predominate over residues 236 to 261 (TVNQGEMSSPQRVTSSQQQTRISASS). Ser-244 is modified (phosphoserine; by CDK5). Residues Ser-250, Ser-258, Ser-261, Ser-272, Ser-303, Ser-322, Ser-332, and Ser-340 each carry the phosphoserine modification. The segment at 262–315 (ATRELDELMASLSDFKMQGLEQRVDGERPWAAGWPPSSRQSSPEGQDEGGFMAQ) is required for binding to PARVA and ILK. Positions 265 to 276 (ELDELMASLSDF) match the LD motif 4 motif. A disordered region spans residues 289-338 (RPWAAGWPPSSRQSSPEGQDEGGFMAQGKTGSSSPPGGLSKPGSQLDSML). Low complexity predominate over residues 315 to 334 (QGKTGSSSPPGGLSKPGSQL). Positions 333–345 (QLDSMLGSLQSDL) match the LD motif 5 motif. 4 consecutive LIM zinc-binding domains span residues 356–415 (GVCG…LFSP), 416–473 (RCYY…DMFA), 474–533 (PKCG…RRGS), and 534–591 (LCSG…KLFC). Phosphoserine is present on Ser-533.

Belongs to the paxillin family. Interacts in vitro with VCL/vinculin as well as to the SH3 domain of SRC and, when tyrosine phosphorylated, to the SH2 domain of CRK. Interacts with GIT1. Interacts with NUDT16L1/SDOS. Interacts with PTK2/FAK1. Interacts with PTK2B/PYK2. Interacts with ASAP2. Interacts with unphosphorylated ITGA4. Interacts with RNF5. Interacts with PDCD10. Interacts with NEK3, the interaction is prolactin-dependent. Interacts with PTK6. Interacts with TGFB1I1. Interacts with SORBS1. Interacts with PARVB. Interacts (via LD motif 4) with PARVA/PARVIN. Interacts (via LD motif 4) with ILK. Interacts (via cytoplasmic domain) with CEACAM1; the interaction is phosphotyrosyl-dependent. Interacts with LIMA1; this complex stabilizes actin dynamics. Interacts with CD36 (via C-terminus). Interacts with TRIM15. Interacts with PAK4; PAK4 acts as a scaffold to suppport PAXI phosphorylation at Ser-272. In terms of processing, phosphorylated by MAPK1/ERK2. Phosphorylated on tyrosine residues during integrin-mediated cell adhesion, embryonic development, fibroblast transformation and following stimulation of cells by mitogens. Phosphorylation at Ser-244 by CDK5 reduces its interaction with PTK2/FAK1 in matrix-cell focal adhesions (MCFA) during oligodendrocytes (OLs) differentiation. Phosphorylation at Tyr-31 and Tyr-118 by PTK6 promote the activation of RAC1 via CRK/CrKII, thereby promoting migration and invasion. Phosphorylation at Ser-250 by SLK is required for PXN redistribution and cell motility. Phosphorylation at Ser-272 promotes focal adhesion disassembly during cell migration.

It localises to the cytoplasm. The protein localises to the cytoskeleton. The protein resides in the cell junction. It is found in the focal adhesion. Its subcellular location is the cell cortex. Functionally, cytoskeletal protein involved in actin-membrane attachment at sites of cell adhesion to the extracellular matrix (focal adhesion). Recruits other proteins such as TRIM15 to focal adhesion. This chain is Paxillin, found in Mus musculus (Mouse).